Reading from the N-terminus, the 876-residue chain is Ergothioneine biosynthesis protein 1 (876 aa).

The interval 36–350 (IIDIRRVAVE…TYGNEYGLHL (315 aa)) is L-histidine N(alpha)-methyltransferase. Residue Y88 participates in L-histidine binding. S-adenosyl-L-methionine-binding residues include G119, K125, and D146. Residues N202, Y242, and 315–317 (EQS) each bind L-histidine. Residues 378–874 (ALWATWDVVT…YAWVGARVVR (497 aa)) form a hercynylcysteine S-oxide synthase region. Fe cation-binding residues include H413, H506, and H510. 2 disordered regions span residues 631–650 (GTTNSVSGHHSNRTSKQQLP) and 732–761 (TNNGVEITPPSSPSSETPAESSSPSDSNTT). Residues 744 to 758 (PSSETPAESSSPSDS) are compositionally biased toward low complexity.

In the N-terminal section; belongs to the methyltransferase superfamily. EgtD family. The protein in the C-terminal section; belongs to the EgtB family. Fe(2+) is required as a cofactor.

It is found in the cytoplasm. Its subcellular location is the nucleus. It carries out the reaction L-histidine + 3 S-adenosyl-L-methionine = hercynine + 3 S-adenosyl-L-homocysteine + 3 H(+). The enzyme catalyses hercynine + L-cysteine + O2 = S-(hercyn-2-yl)-L-cysteine S-oxide + H2O. It participates in amino-acid biosynthesis; ergothioneine biosynthesis. Catalyzes the SAM-dependent triple methylation of the alpha-amino group of histidine to form hercynine and subsequent conjugation with cysteine and oxygen to form hercynylcysteine sulfoxide, the first two steps in the biosynthesis pathway of ergothioneine. Ergothioneine is an unusual thio-histidine betaine amino acid that acts as an antioxidant against peroxide in conidia and contributes to conidial longevity. The polypeptide is Ergothioneine biosynthesis protein 1 (Neurospora crassa (strain ATCC 24698 / 74-OR23-1A / CBS 708.71 / DSM 1257 / FGSC 987)).